Consider the following 336-residue polypeptide: Atypical chemokine receptor 1 (336 aa).

Over methionine 1–proline 63 the chain is Extracellular. 3 N-linked (GlcNAc...) asparagine glycosylation sites follow: asparagine 16, asparagine 27, and asparagine 33. 2 cysteine pairs are disulfide-bonded: cysteine 51-cysteine 276 and cysteine 129-cysteine 195. Residues phenylalanine 64–phenylalanine 84 form a helical membrane-spanning segment. Over arginine 85 to glycine 95 the chain is Cytoplasmic. Residues tryptophan 96–leucine 116 form a helical membrane-spanning segment. Residues alanine 117–cysteine 129 lie on the Extracellular side of the membrane. The helical transmembrane segment at serine 130–leucine 153 threads the bilayer. At glycine 154–threonine 166 the chain is on the cytoplasmic side. The helical transmembrane segment at leucine 167 to alanine 187 threads the bilayer. Residues serine 188–glutamine 207 lie on the Extracellular side of the membrane. The chain crosses the membrane as a helical span at residues alanine 208–alanine 228. The Cytoplasmic segment spans residues lysine 229–asparagine 244. A helical transmembrane segment spans residues isoleucine 245 to leucine 265. The Extracellular portion of the chain corresponds to valine 266–asparagine 287. The helical transmembrane segment at leucine 288–tyrosine 308 threads the bilayer. Topologically, residues histidine 309–serine 336 are cytoplasmic.

Belongs to the G-protein coupled receptor 1 family. Atypical chemokine receptor subfamily.

Its subcellular location is the early endosome. It is found in the recycling endosome. The protein resides in the membrane. Its function is as follows. Atypical chemokine receptor that controls chemokine levels and localization via high-affinity chemokine binding that is uncoupled from classic ligand-driven signal transduction cascades, resulting instead in chemokine sequestration, degradation, or transcytosis. Also known as interceptor (internalizing receptor) or chemokine-scavenging receptor or chemokine decoy receptor. Has a promiscuous chemokine-binding profile, interacting with inflammatory chemokines of both the CXC and the CC subfamilies but not with homeostatic chemokines. Acts as a receptor for chemokines including CCL2, CCL5, CCL7, CCL11, CCL13, CCL14, CCL17, CXCL5, CXCL6, IL8/CXCL8, CXCL11, GRO, RANTES, MCP-1 and TARC. May regulate chemokine bioavailability and, consequently, leukocyte recruitment through two distinct mechanisms: when expressed in endothelial cells, it sustains the abluminal to luminal transcytosis of tissue-derived chemokines and their subsequent presentation to circulating leukocytes; when expressed in erythrocytes, serves as blood reservoir of cognate chemokines but also as a chemokine sink, buffering potential surges in plasma chemokine levels. This Gorilla gorilla gorilla (Western lowland gorilla) protein is Atypical chemokine receptor 1 (ACKR1).